The chain runs to 432 residues: Maltoporin (432 aa).

The first 22 residues, 1 to 22, serve as a signal peptide directing secretion; that stretch reads MKKVSVIAAAVAATLAAGSAFA.

Belongs to the porin LamB (TC 1.B.3) family. Homotrimer formed of three 18-stranded antiparallel beta-barrels, containing three independent channels.

The protein resides in the cell outer membrane. It carries out the reaction beta-maltose(in) = beta-maltose(out). Involved in the transport of maltose and maltodextrins. This Vibrio parahaemolyticus serotype O3:K6 (strain RIMD 2210633) protein is Maltoporin.